We begin with the raw amino-acid sequence, 364 residues long: Pre-small/secreted glycoprotein (364 aa).

The first 32 residues, 1 to 32, serve as a signal peptide directing secretion; the sequence is MGVTGILQLPRDRFKRTSFFLWVIILFQRTFS. The N-linked (GlcNAc...) asparagine; by host glycan is linked to N40. 2 disulfide bridges follow: C108–C135 and C121–C147. 5 N-linked (GlcNAc...) asparagine; by host glycosylation sites follow: N204, N228, N238, N257, and N268.

It belongs to the filoviruses glycoprotein family. As to quaternary structure, homodimer; disulfide-linked. The homodimers are linked by two disulfide bonds in a parallel orientation. In terms of assembly, monomer. This precursor is processed into mature sGP and delta-peptide by host furin or furin-like proteases. The cleavage site corresponds to the furin optimal cleavage sequence [KR]-X-[KR]-R. Post-translationally, N-glycosylated. In terms of processing, O-glycosylated.

Its subcellular location is the secreted. Its function is as follows. Seems to possess an anti-inflammatory activity as it can reverse the barrier-decreasing effects of TNF alpha. Might therefore contribute to the lack of inflammatory reaction seen during infection in spite the of extensive necrosis and massive virus production. Does not seem to be involved in activation of primary macrophages. Does not seem to interact specifically with neutrophils. Functionally, viroporin that permeabilizes mammalian cell plasma membranes. It acts by altering permeation of ionic compounds and small molecules. This activity may lead to viral enterotoxic activity. The protein is Pre-small/secreted glycoprotein (GP) of Zaire ebolavirus (strain Eckron-76) (ZEBOV).